Reading from the N-terminus, the 42-residue chain is Kappa-actitoxin-Ael2a (42 aa).

Cystine bridges form between Cys-4-Cys-37, Cys-6-Cys-30, and Cys-20-Cys-38.

It belongs to the sea anemone type 3 (BDS) potassium channel toxin family.

The protein localises to the secreted. It localises to the nematocyst. Functionally, peptide with both antimicrobial and neurotoxin activities. This toxin acts both on ERG potassium channels and sodium channels. It potently and reversibly inhibits human Kv11.1/KCNH2/ERG1 (IC(50)=34 nM), rat Kv11.1/KCNH2/ERG1 and Kv11.3/KCNH7/ERG3 voltage-gated potassium channels in a similar potency. It acts as a gating-modifier toxin that shifts the voltage-dependence of ERG activation in the positive direction and suppresses its current amplitudes elicited by strong depolarizing pulses. On sodium channels, it blocks Nav1.2/SCN2A (EC(50)=31 nM), Nav1.3/SCN3A, Nav1.4/SCN4A, Nav1.5/SCN5A, Nav1.6/SCN8A, Nav1.8/SCN10A (EC(50)=92 nM). It may act by binding at site 1 or close by, only when the pore is in an open configuration. Shows antibacterial activity against the Gram-negative bacterium S.typhimurium, but not on the bacteria B.subtilis, S.aureus, and P.aeruginosa. In vivo, this toxin does not induce neurotoxic symptoms when injected into mice. In Anthopleura elegantissima (Green aggregating anemone), this protein is Kappa-actitoxin-Ael2a.